We begin with the raw amino-acid sequence, 193 residues long: Potassium-transporting ATPase KdpC subunit (193 aa).

A helical transmembrane segment spans residues 14 to 34; it reads ITFTFLVLCGLVYPLIVTGIA.

The protein belongs to the KdpC family. The system is composed of three essential subunits: KdpA, KdpB and KdpC.

The protein resides in the cell membrane. Its function is as follows. Part of the high-affinity ATP-driven potassium transport (or Kdp) system, which catalyzes the hydrolysis of ATP coupled with the electrogenic transport of potassium into the cytoplasm. This subunit acts as a catalytic chaperone that increases the ATP-binding affinity of the ATP-hydrolyzing subunit KdpB by the formation of a transient KdpB/KdpC/ATP ternary complex. This Bacillus mycoides (strain KBAB4) (Bacillus weihenstephanensis) protein is Potassium-transporting ATPase KdpC subunit.